We begin with the raw amino-acid sequence, 370 residues long: Anhydro-N-acetylmuramic acid kinase (370 aa).

G13 to D20 contacts ATP.

This sequence belongs to the anhydro-N-acetylmuramic acid kinase family.

The enzyme catalyses 1,6-anhydro-N-acetyl-beta-muramate + ATP + H2O = N-acetyl-D-muramate 6-phosphate + ADP + H(+). Its pathway is amino-sugar metabolism; 1,6-anhydro-N-acetylmuramate degradation. The protein operates within cell wall biogenesis; peptidoglycan recycling. Functionally, catalyzes the specific phosphorylation of 1,6-anhydro-N-acetylmuramic acid (anhMurNAc) with the simultaneous cleavage of the 1,6-anhydro ring, generating MurNAc-6-P. Is required for the utilization of anhMurNAc either imported from the medium or derived from its own cell wall murein, and thus plays a role in cell wall recycling. This Vibrio vulnificus (strain YJ016) protein is Anhydro-N-acetylmuramic acid kinase.